Here is an 89-residue protein sequence, read N- to C-terminus: Small ribosomal subunit protein bS20 (89 aa).

It belongs to the bacterial ribosomal protein bS20 family.

Binds directly to 16S ribosomal RNA. This chain is Small ribosomal subunit protein bS20, found in Phenylobacterium zucineum (strain HLK1).